Consider the following 262-residue polypeptide: ATP synthase subunit a (262 aa).

5 consecutive transmembrane segments (helical) span residues valine 26 to serine 46, valine 86 to isoleucine 106, aspartate 130 to isoleucine 150, leucine 204 to leucine 226, and leucine 240 to alanine 260.

This sequence belongs to the ATPase A chain family. As to quaternary structure, F-type ATPases have 2 components, CF(1) - the catalytic core - and CF(0) - the membrane proton channel. CF(1) has five subunits: alpha(3), beta(3), gamma(1), delta(1), epsilon(1). CF(0) has three main subunits: a(1), b(2) and c(9-12). The alpha and beta chains form an alternating ring which encloses part of the gamma chain. CF(1) is attached to CF(0) by a central stalk formed by the gamma and epsilon chains, while a peripheral stalk is formed by the delta and b chains.

The protein localises to the cell inner membrane. Functionally, key component of the proton channel; it plays a direct role in the translocation of protons across the membrane. This chain is ATP synthase subunit a, found in Haemophilus influenzae (strain 86-028NP).